Reading from the N-terminus, the 160-residue chain is Bacterial microcompartment shell protein PduK (160 aa).

A BMC domain is found at 11–96 (SLGLLEVCGL…PGEGILLAET (86 aa)).

This sequence belongs to the bacterial microcompartments protein family. Interacts with shell proteins PduA and PduP and assembly protein PduM. Fe cation serves as cofactor.

It is found in the bacterial microcompartment. The protein operates within polyol metabolism; 1,2-propanediol degradation. Functionally, a minor shell protein of the bacterial microcompartment (BMC) dedicated to 1,2-propanediol (1,2-PD) degradation. The isolated BMC shell component protein ratio for J:A:B':B:K:T:U is approximately 15:10:7:6:1:1:2. Not required for structural integrity of BMCs nor to mitigate propionaldehyde toxicity, it might be involved in spatial organization of BMCs. Its function is as follows. The 1,2-PD-specific bacterial microcompartment (BMC) concentrates low levels of 1,2-PD catabolic enzymes, concentrates volatile reaction intermediates thus enhancing pathway flux and keeps the level of toxic, mutagenic propionaldehyde low. In Salmonella typhimurium (strain LT2 / SGSC1412 / ATCC 700720), this protein is Bacterial microcompartment shell protein PduK.